The chain runs to 34 residues: Photosystem II reaction center protein Psb30 (34 aa).

The helical transmembrane segment at 5 to 25 threads the bilayer; it reads VLFQLTALIFVVAAGPLVIVL.

The protein belongs to the Psb30/Ycf12 family. PSII is composed of 1 copy each of membrane proteins PsbA, PsbB, PsbC, PsbD, PsbE, PsbF, PsbH, PsbI, PsbJ, PsbK, PsbL, PsbM, PsbT, PsbX, PsbY, PsbZ, Psb30/Ycf12, peripheral proteins of the oxygen-evolving complex and a large number of cofactors. It forms dimeric complexes.

It is found in the plastid. The protein localises to the chloroplast thylakoid membrane. Functionally, a core subunit of photosystem II (PSII), probably helps stabilize the reaction center. In Tupiella akineta (Green alga), this protein is Photosystem II reaction center protein Psb30.